We begin with the raw amino-acid sequence, 266 residues long: MDTFQVIILALIQGLTEFLPISSSAHLILPSQLLGWEDQGLSFDVAVNTGSLLAVVMYFRHELWSMFKAWTDSIITRKQTDESKLSWWIILATIPAVIVGFTAKDFIETYLRNTAVIATTTIVFGLLLWWADRMFRPGFTEFQVGWKKALVIGVAQAMALIPGTSRSGATITAALMLGLSREAAARFSFLMSVPVSLGAAILVTKDLISSGQTIDYQALSLGIIVSFVAAYTCIHLFLKLISRMGMTPFVIYRLALGAILCAFMFA.

8 consecutive transmembrane segments (helical) span residues 1–21 (MDTFQVIILALIQGLTEFLPI), 39–59 (QGLSFDVAVNTGSLLAVVMYF), 87–107 (WWIILATIPAVIVGFTAKDFI), 115–135 (AVIATTTIVFGLLLWWADRMF), 144–164 (VGWKKALVIGVAQAMALIPGT), 183–203 (AAARFSFLMSVPVSLGAAILV), 218–238 (ALSLGIIVSFVAAYTCIHLFL), and 246–266 (MTPFVIYRLALGAILCAFMFA).

The protein belongs to the UppP family.

It is found in the cell inner membrane. It catalyses the reaction di-trans,octa-cis-undecaprenyl diphosphate + H2O = di-trans,octa-cis-undecaprenyl phosphate + phosphate + H(+). Its function is as follows. Catalyzes the dephosphorylation of undecaprenyl diphosphate (UPP). Confers resistance to bacitracin. The protein is Undecaprenyl-diphosphatase of Shewanella sediminis (strain HAW-EB3).